Here is a 513-residue protein sequence, read N- to C-terminus: ATP synthase subunit alpha (513 aa).

Residue 169–176 participates in ATP binding; it reads GDRQTGKT.

This sequence belongs to the ATPase alpha/beta chains family. As to quaternary structure, F-type ATPases have 2 components, CF(1) - the catalytic core - and CF(0) - the membrane proton channel. CF(1) has five subunits: alpha(3), beta(3), gamma(1), delta(1), epsilon(1). CF(0) has three main subunits: a(1), b(2) and c(9-12). The alpha and beta chains form an alternating ring which encloses part of the gamma chain. CF(1) is attached to CF(0) by a central stalk formed by the gamma and epsilon chains, while a peripheral stalk is formed by the delta and b chains.

It is found in the cell inner membrane. It carries out the reaction ATP + H2O + 4 H(+)(in) = ADP + phosphate + 5 H(+)(out). Its function is as follows. Produces ATP from ADP in the presence of a proton gradient across the membrane. The alpha chain is a regulatory subunit. The protein is ATP synthase subunit alpha of Escherichia coli O81 (strain ED1a).